Here is a 316-residue protein sequence, read N- to C-terminus: MASTSRLDALPRVTCPNHPDAILVEDYRAGDMICPECGLVVGDRVIDVGSEWRTFSNDKATKDPSRVGDSQNPLLSDGDLSTMIGKGTGAASFDEFGNSKYQNRRTMSSSDRAMMNAFKEITTMADRINLPRNIVDRTNNLFKQVYEQKSLKGRANDAIASACLYIACRQEGVPRTFKEICAVSRISKKEIGRCFKLILKALETSVDLITTGDFMSRFCSNLCLPKQVQMAATHIARKAVELDLVPGRSPISVAAAAIYMASQASAEKRTQKEIGDIAGVADVTIRQSYRLIYPRAPDLFPSDFKFDTPVDKLPQL.

The segment at 11–42 adopts a TFIIB-type zinc-finger fold; sequence PRVTCPNHPDAILVEDYRAGDMICPECGLVVG. Residues Cys15, His18, Cys34, and Cys37 each contribute to the Zn(2+) site. 3 positions are modified to phosphoserine: Ser70, Ser76, and Ser92. 2 repeat units span residues 124–200 and 218–294. Lys152, Arg154, Lys189, and Lys196 together coordinate DNA. The tract at residues 189–193 is core promoter DNA-binding; sequence KEIGR. Lys238 is subject to N6-acetyllysine; by autocatalysis. The interval 244–316 is necessary for TATA box-bound TBP complex formation; sequence LVPGRSPISV…DTPVDKLPQL (73 aa). Arg248 provides a ligand contact to DNA. The tract at residues 249-252 is core promoter DNA-binding; the sequence is SPIS. 5 residues coordinate DNA: Lys272, Ala281, Thr284, Arg286, and Arg290. The interval 283-286 is core promoter DNA-binding; the sequence is VTIR.

It belongs to the TFIIB family. As to quaternary structure, found in a ternary complex with TATA box-bound TBP. Part of a TFIID-containing RNA polymerase II pre-initiation complex (PIC) that is composed of TBP and at least GTF2A1, GTF2A2, GTF2E1, GTF2E2, GTF2F1, GTF2H2, GTF2H3, GTF2H4, GTF2H5, GTF2B, TCEA1, ERCC2, ERCC3, TAF1, TAF2, TAF3, TAF4, TAF5, TAF6, TAF7, TAF8, TAF9, TAF10, TAF11, TAF12 and TAF13. Associates with TFIID-TFIIA (DA complex) to form TFIID-TFIIA-TFIIB (DAB complex), which is then recognized by RNA polymerase II (Pol II). Found in a RNA polymerase II initiation complex. Interacts (via C-terminus) with TBP; this interaction with TATA box-bound TBP guides Pol II into the PIC. Interacts (via N-terminus) with Pol II. Interacts (via C-terminus) with SSU72; this interaction is inhibited by SYMPK. Interacts with NR2F1; this interaction is direct. Interacts with PGR. Interacts with ESR1. Interacts with GTF2F1 (via C-terminus and preferentially via acetylated form); this interaction prevents binding of GTF2B to GTF2F2. Interacts with GTF2F2 (via N-terminus); this interaction is inhibited in presence of GTF2F1. Interacts with the transcription elongation factor TCEA2. Interacts with HSF1 (via transactivation domain). Interacts with GPBP1. Acetylated. Autoacetylated; autoacetylation at Lys-238 stimulates transcription activation.

The protein localises to the nucleus. Its subcellular location is the chromosome. It carries out the reaction L-lysyl-[protein] + acetyl-CoA = N(6)-acetyl-L-lysyl-[protein] + CoA + H(+). Its function is as follows. General transcription factor that plays a role in transcription initiation by RNA polymerase II (Pol II). Involved in the pre-initiation complex (PIC) formation and Pol II recruitment at promoter DNA. Together with the TATA box-bound TBP forms the core initiation complex and provides a bridge between TBP and the Pol II-TFIIF complex. Released from the PIC early following the onset of transcription during the initiation and elongation transition and reassociates with TBP during the next transcription cycle. Associates with chromatin to core promoter-specific regions. Binds to two distinct DNA core promoter consensus sequence elements in a TBP-independent manner; these IIB-recognition elements (BREs) are localized immediately upstream (BREu), 5'-[GC][GC][GA]CGCC-3', and downstream (BREd), 5'-[GA]T[TGA][TG][GT][TG][TG]-3', of the TATA box element. Modulates transcription start site selection. Also exhibits autoacetyltransferase activity that contributes to the activated transcription. This chain is Transcription initiation factor IIB, found in Mus musculus (Mouse).